Consider the following 188-residue polypeptide: Phosphoheptose isomerase (188 aa).

The SIS domain maps to 33 to 188; that stretch reads VTASLRAGGK…CGLVEDALCS (156 aa). 48 to 50 is a substrate binding site; the sequence is NGG. The Zn(2+) site is built by H57 and E61. Substrate contacts are provided by residues E61, 90–91, 116–118, S121, and Q168; these read ND and STS. Zn(2+) contacts are provided by Q168 and H176.

This sequence belongs to the SIS family. GmhA subfamily. In terms of assembly, homotetramer. Requires Zn(2+) as cofactor.

The protein resides in the cytoplasm. The enzyme catalyses 2 D-sedoheptulose 7-phosphate = D-glycero-alpha-D-manno-heptose 7-phosphate + D-glycero-beta-D-manno-heptose 7-phosphate. It participates in carbohydrate biosynthesis; D-glycero-D-manno-heptose 7-phosphate biosynthesis; D-glycero-alpha-D-manno-heptose 7-phosphate and D-glycero-beta-D-manno-heptose 7-phosphate from sedoheptulose 7-phosphate: step 1/1. Its function is as follows. Catalyzes the isomerization of sedoheptulose 7-phosphate in D-glycero-D-manno-heptose 7-phosphate. The polypeptide is Phosphoheptose isomerase (Rhodospirillum rubrum (strain ATCC 11170 / ATH 1.1.1 / DSM 467 / LMG 4362 / NCIMB 8255 / S1)).